The primary structure comprises 248 residues: Ribonuclease PH (248 aa).

Phosphate-binding positions include Arg93 and 131–133 (GTR).

This sequence belongs to the RNase PH family. In terms of assembly, homohexameric ring arranged as a trimer of dimers.

It carries out the reaction tRNA(n+1) + phosphate = tRNA(n) + a ribonucleoside 5'-diphosphate. Phosphorolytic 3'-5' exoribonuclease that plays an important role in tRNA 3'-end maturation. Removes nucleotide residues following the 3'-CCA terminus of tRNAs; can also add nucleotides to the ends of RNA molecules by using nucleoside diphosphates as substrates, but this may not be physiologically important. Probably plays a role in initiation of 16S rRNA degradation (leading to ribosome degradation) during starvation. The chain is Ribonuclease PH from Bifidobacterium longum (strain NCC 2705).